Reading from the N-terminus, the 60-residue chain is uncharacterized protein (60 aa).

A helical transmembrane segment spans residues Met-14–Tyr-34. The interval Gly-38–Tyr-60 is disordered. Over residues Thr-40–Tyr-60 the composition is skewed to polar residues.

Its subcellular location is the host membrane. This is an uncharacterized protein from Dryophytes versicolor (chameleon treefrog).